Consider the following 870-residue polypeptide: Probable coatomer subunit gamma (870 aa).

6 HEAT repeats span residues 60-97, 99-133, 168-205, 278-315, 316-350, and 389-425; these read TEAT…VSDD, IIVT…TGML, EVVR…NDRL, SEIQ…AHPN, AVMS…GAES, and HTVM…ENPD.

Belongs to the COPG family. As to quaternary structure, oligomeric complex that consists of at least the alpha, beta, beta', gamma, delta, epsilon and zeta subunits.

The protein resides in the cytoplasm. It localises to the golgi apparatus membrane. It is found in the cytoplasmic vesicle. The protein localises to the COPI-coated vesicle membrane. Its function is as follows. The coatomer is a cytosolic protein complex that binds to dilysine motifs and reversibly associates with Golgi non-clathrin-coated vesicles, which further mediate biosynthetic protein transport from the ER, via the Golgi up to the trans Golgi network. Coatomer complex is required for budding from Golgi membranes, and is essential for the retrograde Golgi-to-ER transport of dilysine-tagged proteins. The chain is Probable coatomer subunit gamma from Caenorhabditis elegans.